A 242-amino-acid polypeptide reads, in one-letter code: MSSPQPPRFDGQRWSNADDDRIEVLPADPAWPQHFAAEAEAIRTALALPGLGIEHVGSTAVPGLDAKPIIDILLLPPPGHDPQRLVAPLEGLGYQFWRENPNTQRMFFVKGMPPFGHGRTHHVHVMPLAQADRYLLFRDWLRNHPDDARLYAETKHALARRYPTDREAYTRGKDEVVARILGRALAATRHPMIQSGLVRGEREMHARELRETLVAGAESTPGGPADTAYFESLRSRVSKPQD.

A disordered region spans residues 215 to 242 (AGAESTPGGPADTAYFESLRSRVSKPQD).

The protein belongs to the UPF0157 (GrpB) family.

This is UPF0157 protein PA4798 from Pseudomonas aeruginosa (strain ATCC 15692 / DSM 22644 / CIP 104116 / JCM 14847 / LMG 12228 / 1C / PRS 101 / PAO1).